A 1166-amino-acid chain; its full sequence is Myosin-1 (1166 aa).

The segment covering 1–13 has biased composition (polar residues); that stretch reads MSQKVTPFMQSLK. The tract at residues 1–71 is disordered; it reads MSQKVTPFMQ…AGDSEDSPYS (71 aa). The residue at position 14 (serine 14) is a Phosphoserine. Polar residues predominate over residues 32–45; sequence NSSGASVRLTNSNV. The region spanning 112–161 is the Myosin N-terminal SH3-like domain; the sequence is KKILQSWIQLPNGNWELGKILSTSGEESVISLPEGKVIKVISETLVPANP. Positions 165-837 constitute a Myosin motor domain; the sequence is DGVDDLMQLS…QIGVLEDTRN (673 aa). ATP-binding positions include 256–263 and 304–312; these read GESGAGKT and NDNSSRFGK. 2 actin-binding regions span residues 589–623 and 717–739; these read LFEK…KQHL and LFQL…KPNN. 4 IQ domains span residues 839–868, 862–891, 888–917, and 911–940; these read TLHG…GISI, LKRG…RHKA, RHKA…ASVV, and IADA…LKSG. A coiled-coil region spans residues 955-1005; it reads SVLSELQRRVLKAEAALREKEEENDILQQRLQQYENRWSEYETKMKSMEEI. The tract at residues 1030 to 1065 is disordered; it reads ARNSDASVNASDATDWDSSSNQFRSQTSNGVGSRLQ. Residues 1032–1060 are compositionally biased toward polar residues; it reads NSDASVNASDATDWDSSSNQFRSQTSNGV.

The protein belongs to the TRAFAC class myosin-kinesin ATPase superfamily. Myosin family. Plant myosin class VIII subfamily. As to quaternary structure, homodimer.

Its subcellular location is the cell junction. It localises to the plasmodesma. The protein resides in the cytoplasm. It is found in the cytoskeleton. The protein localises to the phragmoplast. Its subcellular location is the endosome. It localises to the endoplasmic reticulum. Myosin heavy chain that is required for the cell cycle-regulated transport of various organelles and proteins for their segregation. Functions by binding with its tail domain to receptor proteins on organelles and exerting force with its N-terminal motor domain against actin filaments, thereby transporting its cargo along polarized actin cables. Involved in endocytosis via its action in endosomal trafficking. This is Myosin-1 (VIII-1) from Arabidopsis thaliana (Mouse-ear cress).